Here is a 383-residue protein sequence, read N- to C-terminus: Acetylornithine deacetylase (383 aa).

Position 80 (His-80) interacts with Zn(2+). The active site involves Asp-82. Asp-112 provides a ligand contact to Zn(2+). Glu-144 is an active-site residue. Zn(2+) is bound by residues Glu-145, Glu-169, and His-355.

The protein belongs to the peptidase M20A family. ArgE subfamily. In terms of assembly, homodimer. It depends on Zn(2+) as a cofactor. Co(2+) is required as a cofactor. The cofactor is glutathione.

The protein localises to the cytoplasm. The catalysed reaction is N(2)-acetyl-L-ornithine + H2O = L-ornithine + acetate. Its pathway is amino-acid biosynthesis; L-arginine biosynthesis; L-ornithine from N(2)-acetyl-L-ornithine (linear): step 1/1. Its function is as follows. Catalyzes the hydrolysis of the amide bond of N(2)-acetylated L-amino acids. Cleaves the acetyl group from N-acetyl-L-ornithine to form L-ornithine, an intermediate in L-arginine biosynthesis pathway, and a branchpoint in the synthesis of polyamines. In Edwardsiella ictaluri (strain 93-146), this protein is Acetylornithine deacetylase.